Here is a 154-residue protein sequence, read N- to C-terminus: PTS system fructose-specific EIIA component (154 aa).

The 145-residue stretch at 8 to 152 (TITPLELISL…QTVQDVLAEV (145 aa)) folds into the PTS EIIA type-2 domain. The Tele-phosphohistidine intermediate role is filled by His70. Position 70 is a phosphohistidine; by HPr (His70).

It localises to the cytoplasm. In terms of biological role, the phosphoenolpyruvate-dependent sugar phosphotransferase system (sugar PTS), a major carbohydrate active transport system, catalyzes the phosphorylation of incoming sugar substrates concomitantly with their translocation across the cell membrane. The enzyme II PtfABC PTS system is involved in fructose transport. The sequence is that of PTS system fructose-specific EIIA component from Haloferax volcanii (strain ATCC 29605 / DSM 3757 / JCM 8879 / NBRC 14742 / NCIMB 2012 / VKM B-1768 / DS2) (Halobacterium volcanii).